A 259-amino-acid chain; its full sequence is MFAFFNKNDPADNTDVQLDPERIPAHVAIIMDGNGRWAKARHLPRVAGHKEGMNTVKKITIAASDLGVKVLTLYAFSTENWKRPTDEVNYLMQLPVSFFDTFVPDLIKNNVRVQVMGYVDHLPEATQKAVQNAIADTKDCDGMVLNFALNYGSRAEIVTGVQKIAQQVQDGQLAVGDIDDATIDAALMTAPLAPYNDPDLLIRTSGEERISNFLMWQIAYSELVFTDVKWPDFTAATLQACIADFQSRDRRFGGLSDHK.

The active site involves aspartate 32. Residue aspartate 32 participates in Mg(2+) binding. Substrate is bound by residues 33–36 (GNGR), tryptophan 37, arginine 45, histidine 49, and 77–79 (STE). Catalysis depends on asparagine 80, which acts as the Proton acceptor. Substrate-binding positions include tryptophan 81, arginine 83, arginine 203, and 209–211 (RIS). Glutamate 222 provides a ligand contact to Mg(2+).

It belongs to the UPP synthase family. In terms of assembly, homodimer. It depends on Mg(2+) as a cofactor.

It catalyses the reaction 8 isopentenyl diphosphate + (2E,6E)-farnesyl diphosphate = di-trans,octa-cis-undecaprenyl diphosphate + 8 diphosphate. Functionally, catalyzes the sequential condensation of isopentenyl diphosphate (IPP) with (2E,6E)-farnesyl diphosphate (E,E-FPP) to yield (2Z,6Z,10Z,14Z,18Z,22Z,26Z,30Z,34E,38E)-undecaprenyl diphosphate (di-trans,octa-cis-UPP). UPP is the precursor of glycosyl carrier lipid in the biosynthesis of bacterial cell wall polysaccharide components such as peptidoglycan and lipopolysaccharide. The protein is Ditrans,polycis-undecaprenyl-diphosphate synthase ((2E,6E)-farnesyl-diphosphate specific) (uppS) of Lactiplantibacillus plantarum (strain ATCC BAA-793 / NCIMB 8826 / WCFS1) (Lactobacillus plantarum).